Reading from the N-terminus, the 528-residue chain is uncharacterized protein (528 aa).

Residue 6–35 (DYVVVGTGSAGAVVASRLSTDPATTVVALE) participates in FAD binding. Catalysis depends on histidine 468, which acts as the Proton acceptor.

The protein belongs to the GMC oxidoreductase family. FAD is required as a cofactor.

This is an uncharacterized protein from Mycobacterium bovis (strain ATCC BAA-935 / AF2122/97).